Reading from the N-terminus, the 454-residue chain is Probable spastin homolog Bm1_53365 (454 aa).

An ATP-binding site is contributed by 218–225 (GPPGNGKT).

This sequence belongs to the AAA ATPase family. Spastin subfamily. In terms of assembly, homohexamer. The homohexamer is stabilized by ATP-binding. The homohexamer may adopt a ring conformation through which microtubules pass prior to being severed. Interacts with microtubules.

It is found in the cytoplasm. It localises to the cytoskeleton. The protein localises to the perinuclear region. The catalysed reaction is n ATP + n H2O + a microtubule = n ADP + n phosphate + (n+1) alpha/beta tubulin heterodimers.. In terms of biological role, severs microtubules, probably in an ATP-dependent fashion. The sequence is that of Probable spastin homolog Bm1_53365 from Brugia malayi (Filarial nematode worm).